Here is a 121-residue protein sequence, read N- to C-terminus: Small ribosomal subunit protein bS6 (121 aa).

The tract at residues 102 to 121 (MMRNVEREEARKAQQQEYAA) is disordered. Basic and acidic residues predominate over residues 105-115 (NVEREEARKAQ).

Belongs to the bacterial ribosomal protein bS6 family.

Binds together with bS18 to 16S ribosomal RNA. The protein is Small ribosomal subunit protein bS6 of Polaromonas sp. (strain JS666 / ATCC BAA-500).